A 443-amino-acid polypeptide reads, in one-letter code: ATP-dependent protease ATPase subunit HslU (443 aa).

ATP contacts are provided by residues I20, 62-67 (GVGKTE), D255, E321, and R393.

It belongs to the ClpX chaperone family. HslU subfamily. As to quaternary structure, a double ring-shaped homohexamer of HslV is capped on each side by a ring-shaped HslU homohexamer. The assembly of the HslU/HslV complex is dependent on binding of ATP.

The protein resides in the cytoplasm. Its function is as follows. ATPase subunit of a proteasome-like degradation complex; this subunit has chaperone activity. The binding of ATP and its subsequent hydrolysis by HslU are essential for unfolding of protein substrates subsequently hydrolyzed by HslV. HslU recognizes the N-terminal part of its protein substrates and unfolds these before they are guided to HslV for hydrolysis. The chain is ATP-dependent protease ATPase subunit HslU from Helicobacter pylori (strain Shi470).